The following is a 399-amino-acid chain: Forkhead box protein I3 (399 aa).

3 disordered regions span residues 87–109, 221–287, and 307–353; these read AGAQRGFAQPSASAPASPAGSAA, KRRR…ASTL, and SSSS…STVG. The segment covering 96 to 109 has biased composition (low complexity); that stretch reads PSASAPASPAGSAA. Residues Ser99 and Ser103 each carry the phosphoserine modification. A DNA-binding region (fork-head) is located at residues 129-223; sequence RPPYSYSALI…DNGNFRRKRR (95 aa). The Nuclear localization signal motif lies at 219 to 225; it reads RRKRRRR. Polar residues-rich tracts occupy residues 228 to 248 and 258 to 267; these read ASSNLTVPSGTSKSEGQSSRL and SPSSILRPSQ. Phosphoserine is present on residues Ser258, Ser266, and Ser268. 3 stretches are compositionally biased toward polar residues: residues 275–287, 307–317, and 328–353; these read TKSTASSPGASTL, SSSSMGNQRTL, and QLPSSTFPNTSVPDSSPDSMQLSTVG. The short motif at 385–393 is the 9aaTAD element; the sequence is SMVNSLIYP.

In terms of processing, phosphorylation promotes the transcription factor activity. Dephosphorylation by protein phosphatase 2A (PP2A) reduces its activity. In terms of tissue distribution, specifically expressed in the epithelium in developing ectodermal appendages. Expressed in pharyngeal endoderm and ectoderm. Expressed in pre-placodal ectoderm. Down-regulated as the otic placode is induced. Expressed in teeth and hair follicles throughout embryogenesis. Expressed in mammary glands only during the earliest stages of development.

The protein localises to the nucleus. In terms of biological role, transcription factor required for pharyngeal arch development, which is involved in hair, ear, jaw and dental development. May act as a pioneer transcription factor during pharyngeal arch development. Required for epithelial cell differentiation within the epidermis. Acts at multiple stages of otic placode induction: necessary for preplacodal ectoderm to execute an inner ear program. Required for hair follicle stem cell specification. Acts downstream of TBX1 for the formation of the thymus and parathyroid glands from the third pharyngeal pouch. This chain is Forkhead box protein I3, found in Mus musculus (Mouse).